We begin with the raw amino-acid sequence, 311 residues long: Solute carrier family 25 member 48 (311 aa).

3 Solcar repeats span residues 3–86, 101–205, and 214–301; these read SFQL…TQRF, RTLS…LSEW, and PSPC…SLQA. The next 6 membrane-spanning stretches (helical) occupy residues 9 to 29, 61 to 81, 107 to 127, 189 to 209, 217 to 237, and 277 to 295; these read FAAG…LDTV, GMSF…GVFS, LLAS…VDLI, VPGY…ITPE, CAVW…ATPM, and ITVN…FLGY.

The protein belongs to the mitochondrial carrier (TC 2.A.29) family.

It is found in the mitochondrion inner membrane. The chain is Solute carrier family 25 member 48 (SLC25A48) from Homo sapiens (Human).